The chain runs to 157 residues: SsrA-binding protein (157 aa).

This sequence belongs to the SmpB family.

It is found in the cytoplasm. In terms of biological role, required for rescue of stalled ribosomes mediated by trans-translation. Binds to transfer-messenger RNA (tmRNA), required for stable association of tmRNA with ribosomes. tmRNA and SmpB together mimic tRNA shape, replacing the anticodon stem-loop with SmpB. tmRNA is encoded by the ssrA gene; the 2 termini fold to resemble tRNA(Ala) and it encodes a 'tag peptide', a short internal open reading frame. During trans-translation Ala-aminoacylated tmRNA acts like a tRNA, entering the A-site of stalled ribosomes, displacing the stalled mRNA. The ribosome then switches to translate the ORF on the tmRNA; the nascent peptide is terminated with the 'tag peptide' encoded by the tmRNA and targeted for degradation. The ribosome is freed to recommence translation, which seems to be the essential function of trans-translation. In Chlorobium luteolum (strain DSM 273 / BCRC 81028 / 2530) (Pelodictyon luteolum), this protein is SsrA-binding protein.